Here is a 145-residue protein sequence, read N- to C-terminus: Large ribosomal subunit protein uL13 (145 aa).

It belongs to the universal ribosomal protein uL13 family. Part of the 50S ribosomal subunit.

In terms of biological role, this protein is one of the early assembly proteins of the 50S ribosomal subunit, although it is not seen to bind rRNA by itself. It is important during the early stages of 50S assembly. The polypeptide is Large ribosomal subunit protein uL13 (Bacillus cereus (strain G9842)).